Here is a 362-residue protein sequence, read N- to C-terminus: tRNA/tmRNA (uracil-C(5))-methyltransferase (362 aa).

S-adenosyl-L-methionine-binding residues include glutamine 186, tyrosine 214, asparagine 219, glutamate 235, and aspartate 295. The Nucleophile role is filled by cysteine 320. Residue glutamate 354 is the Proton acceptor of the active site.

It belongs to the class I-like SAM-binding methyltransferase superfamily. RNA M5U methyltransferase family. TrmA subfamily.

It catalyses the reaction uridine(54) in tRNA + S-adenosyl-L-methionine = 5-methyluridine(54) in tRNA + S-adenosyl-L-homocysteine + H(+). It carries out the reaction uridine(341) in tmRNA + S-adenosyl-L-methionine = 5-methyluridine(341) in tmRNA + S-adenosyl-L-homocysteine + H(+). In terms of biological role, dual-specificity methyltransferase that catalyzes the formation of 5-methyluridine at position 54 (m5U54) in all tRNAs, and that of position 341 (m5U341) in tmRNA (transfer-mRNA). This is tRNA/tmRNA (uracil-C(5))-methyltransferase from Ectopseudomonas mendocina (strain ymp) (Pseudomonas mendocina).